Reading from the N-terminus, the 349-residue chain is MSATGLSPVRCAFVLLLALCSRPASGQDCSGQCQCAAGKRRACPAGVSLVLDGCGCCRLCAKQLGELCTERDPCDPHKGLFCDFGSPANRKIGVCTAKDGAPCVFGGTVYRSGESFQSSCKYQCTCLDGAVGCVPLCSMDVRLPSPDCPFPRRVKLPGKCCEEWVCDEPKDHTVVGPALAAYRLEDTFGPDPTMMRANCLVQTTEWSACSKTCGMGISTRVTNDNAFCRLEKQSRLCMVRPCEADLEENIKKGKKCIRTPKISKPVKFELSGCTSVKTYRAKFCGVCTDGRCCTPHRTTTLPVEFKCPDGEVMKKSMMFIKTCACHYNCPGDNDIFESLYYRKMYGDMA.

Positions 1-26 are cleaved as a signal peptide; that stretch reads MSATGLSPVRCAFVLLLALCSRPASG. The IGFBP N-terminal domain maps to 27 to 98; it reads QDCSGQCQCA…NRKIGVCTAK (72 aa). 6 cysteine pairs are disulfide-bonded: C29/C54, C33/C56, C35/C57, C43/C60, C68/C82, and C74/C95. The VWFC domain maps to 101–167; sequence APCVFGGTVY…GKCCEEWVCD (67 aa). Residues 198–243 enclose the TSP type-1 domain; that stretch reads NCLVQTTEWSACSKTCGMGISTRVTNDNAFCRLEKQSRLCMVRPCE. A heparin-binding region spans residues 247-349; that stretch reads EENIKKGKKC…YYRKMYGDMA (103 aa). Intrachain disulfides connect C256–C293, C273–C307, C284–C323, C287–C325, and C292–C329. One can recognise a CTCK domain in the interval 256–330; that stretch reads CIRTPKISKP…KTCACHYNCP (75 aa).

It belongs to the CCN family. As to quaternary structure, monomer. Interacts with TSKU.

Its subcellular location is the secreted. The protein localises to the extracellular space. The protein resides in the extracellular matrix. Major connective tissue mitoattractant secreted by vascular endothelial cells. Promotes proliferation and differentiation of chondrocytes. Is involved in the stimulation of osteoblast differentiation and has a critical role in osteogenesis. Mediates heparin- and divalent cation-dependent cell adhesion in many cell types including fibroblasts, myofibroblasts, endothelial and epithelial cells. Enhances fibroblast growth factor-induced DNA synthesis. This is CCN family member 2 (CCN2) from Sus scrofa (Pig).